Here is a 187-residue protein sequence, read N- to C-terminus: Large ribosomal subunit protein uL6 (187 aa).

This sequence belongs to the universal ribosomal protein uL6 family. In terms of assembly, part of the 50S ribosomal subunit.

This protein binds to the 23S rRNA, and is important in its secondary structure. It is located near the subunit interface in the base of the L7/L12 stalk, and near the tRNA binding site of the peptidyltransferase center. In Roseiflexus sp. (strain RS-1), this protein is Large ribosomal subunit protein uL6.